We begin with the raw amino-acid sequence, 277 residues long: Shikimate dehydrogenase (NADP(+)) (277 aa).

Shikimate contacts are provided by residues 15–17 (SLS) and T62. K66 serves as the catalytic Proton acceptor. Residues N87 and D102 each coordinate shikimate. Residues 127–131 (GAGGA), 151–156 (NRTVDK), and I219 each bind NADP(+). Y221 serves as a coordination point for shikimate. Position 242 (G242) interacts with NADP(+).

It belongs to the shikimate dehydrogenase family. As to quaternary structure, homodimer.

The catalysed reaction is shikimate + NADP(+) = 3-dehydroshikimate + NADPH + H(+). It functions in the pathway metabolic intermediate biosynthesis; chorismate biosynthesis; chorismate from D-erythrose 4-phosphate and phosphoenolpyruvate: step 4/7. Functionally, involved in the biosynthesis of the chorismate, which leads to the biosynthesis of aromatic amino acids. Catalyzes the reversible NADPH linked reduction of 3-dehydroshikimate (DHSA) to yield shikimate (SA). This Bacillus cereus (strain ATCC 10987 / NRS 248) protein is Shikimate dehydrogenase (NADP(+)).